We begin with the raw amino-acid sequence, 156 residues long: Small ribosomal subunit protein uS7 (156 aa).

This sequence belongs to the universal ribosomal protein uS7 family. In terms of assembly, part of the 30S ribosomal subunit. Contacts proteins S9 and S11.

One of the primary rRNA binding proteins, it binds directly to 16S rRNA where it nucleates assembly of the head domain of the 30S subunit. Is located at the subunit interface close to the decoding center, probably blocks exit of the E-site tRNA. This chain is Small ribosomal subunit protein uS7, found in Marinobacter nauticus (strain ATCC 700491 / DSM 11845 / VT8) (Marinobacter aquaeolei).